A 162-amino-acid polypeptide reads, in one-letter code: 2-C-methyl-D-erythritol 2,4-cyclodiphosphate synthase (162 aa).

2 residues coordinate a divalent metal cation: Asp9 and His11. Residues 9–11 (DFH) and 37–38 (HS) each bind 4-CDP-2-C-methyl-D-erythritol 2-phosphate. Residue His45 coordinates a divalent metal cation. Residues 59–61 (DIG), 64–68 (FPDTD), 135–138 (TTSE), and Arg145 each bind 4-CDP-2-C-methyl-D-erythritol 2-phosphate.

It belongs to the IspF family. As to quaternary structure, homotrimer. The cofactor is a divalent metal cation.

It catalyses the reaction 4-CDP-2-C-methyl-D-erythritol 2-phosphate = 2-C-methyl-D-erythritol 2,4-cyclic diphosphate + CMP. Its pathway is isoprenoid biosynthesis; isopentenyl diphosphate biosynthesis via DXP pathway; isopentenyl diphosphate from 1-deoxy-D-xylulose 5-phosphate: step 4/6. In terms of biological role, involved in the biosynthesis of isopentenyl diphosphate (IPP) and dimethylallyl diphosphate (DMAPP), two major building blocks of isoprenoid compounds. Catalyzes the conversion of 4-diphosphocytidyl-2-C-methyl-D-erythritol 2-phosphate (CDP-ME2P) to 2-C-methyl-D-erythritol 2,4-cyclodiphosphate (ME-CPP) with a corresponding release of cytidine 5-monophosphate (CMP). This is 2-C-methyl-D-erythritol 2,4-cyclodiphosphate synthase from Leptospira biflexa serovar Patoc (strain Patoc 1 / Ames).